Reading from the N-terminus, the 285-residue chain is Bifunctional protein FolD (285 aa).

Residue glycine 166–serine 168 participates in NADP(+) binding.

Belongs to the tetrahydrofolate dehydrogenase/cyclohydrolase family. In terms of assembly, homodimer.

The catalysed reaction is (6R)-5,10-methylene-5,6,7,8-tetrahydrofolate + NADP(+) = (6R)-5,10-methenyltetrahydrofolate + NADPH. It carries out the reaction (6R)-5,10-methenyltetrahydrofolate + H2O = (6R)-10-formyltetrahydrofolate + H(+). The protein operates within one-carbon metabolism; tetrahydrofolate interconversion. Its function is as follows. Catalyzes the oxidation of 5,10-methylenetetrahydrofolate to 5,10-methenyltetrahydrofolate and then the hydrolysis of 5,10-methenyltetrahydrofolate to 10-formyltetrahydrofolate. The polypeptide is Bifunctional protein FolD (Thioalkalivibrio sulfidiphilus (strain HL-EbGR7)).